The sequence spans 257 residues: 3-methyl-2-oxobutanoate hydroxymethyltransferase (257 aa).

Positions 42 and 86 each coordinate Mg(2+). Residues 42 to 43 (DS), Asp86, and Lys116 contribute to the 3-methyl-2-oxobutanoate site. Glu118 is a binding site for Mg(2+). Glu185 serves as the catalytic Proton acceptor.

Belongs to the PanB family. As to quaternary structure, homodecamer; pentamer of dimers. Requires Mg(2+) as cofactor.

The protein localises to the cytoplasm. It carries out the reaction 3-methyl-2-oxobutanoate + (6R)-5,10-methylene-5,6,7,8-tetrahydrofolate + H2O = 2-dehydropantoate + (6S)-5,6,7,8-tetrahydrofolate. The protein operates within cofactor biosynthesis; (R)-pantothenate biosynthesis; (R)-pantoate from 3-methyl-2-oxobutanoate: step 1/2. Functionally, catalyzes the reversible reaction in which hydroxymethyl group from 5,10-methylenetetrahydrofolate is transferred onto alpha-ketoisovalerate to form ketopantoate. This chain is 3-methyl-2-oxobutanoate hydroxymethyltransferase, found in Prochlorococcus marinus (strain MIT 9312).